The sequence spans 250 residues: 2,3-bisphosphoglycerate-dependent phosphoglycerate mutase (250 aa).

Residues 10–17 (RHGESQWN), 23–24 (TG), R62, 89–92 (ERHY), K100, 116–117 (RR), and 185–186 (GN) contribute to the substrate site. H11 acts as the Tele-phosphohistidine intermediate in catalysis. Residue E89 is the Proton donor/acceptor of the active site.

The protein belongs to the phosphoglycerate mutase family. BPG-dependent PGAM subfamily. Homodimer.

It catalyses the reaction (2R)-2-phosphoglycerate = (2R)-3-phosphoglycerate. It functions in the pathway carbohydrate degradation; glycolysis; pyruvate from D-glyceraldehyde 3-phosphate: step 3/5. Functionally, catalyzes the interconversion of 2-phosphoglycerate and 3-phosphoglycerate. This is 2,3-bisphosphoglycerate-dependent phosphoglycerate mutase from Salmonella dublin (strain CT_02021853).